The chain runs to 270 residues: NAD kinase (270 aa).

The Proton acceptor role is filled by aspartate 57. NAD(+)-binding positions include 57 to 58, 125 to 126, arginine 150, and asparagine 227; these read DG and NE.

Belongs to the NAD kinase family. Requires a divalent metal cation as cofactor.

It localises to the cytoplasm. It carries out the reaction NAD(+) + ATP = ADP + NADP(+) + H(+). In terms of biological role, involved in the regulation of the intracellular balance of NAD and NADP, and is a key enzyme in the biosynthesis of NADP. Catalyzes specifically the phosphorylation on 2'-hydroxyl of the adenosine moiety of NAD to yield NADP. This chain is NAD kinase, found in Ureaplasma parvum serovar 3 (strain ATCC 700970).